We begin with the raw amino-acid sequence, 83 residues long: Large ribosomal subunit protein eL43 (83 aa).

Positions 38, 41, 56, and 59 each coordinate Zn(2+). The C4-type zinc finger occupies 38 to 59; sequence CPVCGRKAVKRISTGIWQCQKC.

It belongs to the eukaryotic ribosomal protein eL43 family. Putative zinc-binding subfamily. As to quaternary structure, part of the 50S ribosomal subunit. Requires Zn(2+) as cofactor.

In terms of biological role, binds to the 23S rRNA. The chain is Large ribosomal subunit protein eL43 from Pyrococcus furiosus (strain ATCC 43587 / DSM 3638 / JCM 8422 / Vc1).